The primary structure comprises 494 residues: Voltage-gated potassium channel regulatory subunit KCNF1 (494 aa).

Residues 1–183 (MDGSGERSLP…KPESSCPARV (183 aa)) lie on the Cytoplasmic side of the membrane. A helical transmembrane segment spans residues 184–204 (VAVLSFLLILVSSVVMCMGTI). Residues 224-244 (NVETACIGWFTLEYLLRLFSS) form a helical membrane-spanning segment. The Cytoplasmic portion of the chain corresponds to 245 to 249 (PNKLH). The chain crosses the membrane as a helical span at residues 250–270 (FALSFMNIVDVLAILPFYVSL). A helical; Voltage-sensor transmembrane segment spans residues 290–310 (QALRIMRIARIFKLARHSSGL). Topologically, residues 311–324 (QTLTYALKRSFKEL) are cytoplasmic. The helical transmembrane segment at 325–345 (GLLLMYLAVGIFVFSALGYTM) threads the bilayer. An intramembrane region (pore-forming) is located at residues 358 to 378 (PQSFWWAIITMTTVGYGDIYP). Positions 370–375 (TVGYGD) match the Selectivity filter motif. The chain crosses the membrane as a helical span at residues 386 to 406 (NAAISFLCGVIAIALPIHPII). Residues 407 to 494 (NNFVRYYNKQ…HHRTRLQSCK (88 aa)) lie on the Cytoplasmic side of the membrane. Residues 433-469 (NSSSGGEGKTGGSRSDLDNLPPEPAGKEAPSCSSRLK) form a disordered region.

It belongs to the potassium channel family. F (TC 1.A.1.2) subfamily. Kv5.1/KCNF1 sub-subfamily. Heterotetramer with KCNB1 or KCNB2. As to expression, detected in heart, brain, liver, skeletal muscle, kidney and pancreas.

The protein localises to the cell membrane. In terms of biological role, regulatory alpha-subunit of the voltage-gated potassium (Kv) channel which, when coassembled with KCNB1 or KCNB2, can modulate their expression and their gating kinetics by acting on deactivation upon repolarization and inactivation during maintained depolarization. Accelerates inactivation but has relatively little effect on deactivation. Coexpression with KCNB1 or KCNB2 markedly slows inactivation. Each modulatory subunit has its own specific properties of regulation, and can lead to extensive inhibitions, to large changes in kinetics, and/or to large shifts in the voltage dependencies of the inactivation process. The gating kinetics depends on the nature and stoichiometry of the associated regulatory sunbunit. Fails to produce a potassium current when expressed alone. The chain is Voltage-gated potassium channel regulatory subunit KCNF1 from Homo sapiens (Human).